Reading from the N-terminus, the 284-residue chain is MTELYIGSHLSTAGGWNALLERSHEEGGTAFAFFPRSPYGKRSKALDPADAATFGARLKAEDYGPLVVHAPYVYNLAGKDEAKRAFAIEALAEDIELLTAIREAGQEVYINIHPGAHVGQGTKTGCQLISEGLNQVFERTTGVMVLLETMAGKGTECGRNFEELATIMNGVKNKANVGVTFDTCHVLDAGYDLVNDYDGVMRQLDEAIGLAKVKAIHVNDSQFGLDSHKDRHANIGQGQLGIPFFTRLVNDPIMAKLPMILETKEQTPATHRDEIELLRGLVQK.

9 residues coordinate Zn(2+): H69, H113, E148, D182, H185, H217, D230, H232, and E262.

This sequence belongs to the AP endonuclease 2 family. The cofactor is Zn(2+).

It catalyses the reaction Endonucleolytic cleavage to 5'-phosphooligonucleotide end-products.. Endonuclease IV plays a role in DNA repair. It cleaves phosphodiester bonds at apurinic or apyrimidinic (AP) sites, generating a 3'-hydroxyl group and a 5'-terminal sugar phosphate. The protein is Probable endonuclease 4 of Bifidobacterium longum subsp. infantis (strain ATCC 15697 / DSM 20088 / JCM 1222 / NCTC 11817 / S12).